A 120-amino-acid polypeptide reads, in one-letter code: Large ribosomal subunit protein bL20 (120 aa).

The protein belongs to the bacterial ribosomal protein bL20 family.

In terms of biological role, binds directly to 23S ribosomal RNA and is necessary for the in vitro assembly process of the 50S ribosomal subunit. It is not involved in the protein synthesizing functions of that subunit. This chain is Large ribosomal subunit protein bL20, found in Pseudoalteromonas translucida (strain TAC 125).